Here is a 1391-residue protein sequence, read N- to C-terminus: DNA-directed RNA polymerase subunit beta' (1391 aa).

Zn(2+) contacts are provided by cysteine 72, cysteine 74, cysteine 87, and cysteine 90. Residues aspartate 462, aspartate 464, and aspartate 466 each coordinate Mg(2+). Residues cysteine 816, cysteine 890, cysteine 897, and cysteine 900 each coordinate Zn(2+).

The protein belongs to the RNA polymerase beta' chain family. The RNAP catalytic core consists of 2 alpha, 1 beta, 1 beta' and 1 omega subunit. When a sigma factor is associated with the core the holoenzyme is formed, which can initiate transcription. The cofactor is Mg(2+). Requires Zn(2+) as cofactor.

It catalyses the reaction RNA(n) + a ribonucleoside 5'-triphosphate = RNA(n+1) + diphosphate. In terms of biological role, DNA-dependent RNA polymerase catalyzes the transcription of DNA into RNA using the four ribonucleoside triphosphates as substrates. This Neisseria meningitidis serogroup C / serotype 2a (strain ATCC 700532 / DSM 15464 / FAM18) protein is DNA-directed RNA polymerase subunit beta'.